The primary structure comprises 286 residues: NADP-dependent dehydrogenase clz5 (286 aa).

Positions 49, 51, 93, 207, 211, 241, and 245 each coordinate NADP(+). Tyr207 (proton acceptor) is an active-site residue. Residue Tyr207 is the Proton donor of the active site. The Lowers pKa of active site Tyr role is filled by Lys211.

The protein belongs to the short-chain dehydrogenases/reductases (SDR) family. Homodimer.

The protein resides in the cytoplasm. It is found in the cytosol. It participates in secondary metabolite biosynthesis. In terms of biological role, NADP-dependent dehydrogenase; part of the gene cluster that mediates the biosynthesis of squalestatin S1 (SQS1, also known as zaragozic acid A), a heavily oxidized fungal polyketide that offers potent cholesterol lowering activity by targeting squalene synthase (SS). SQS1 is composed of a 2,8-dioxobicyclic[3.2.1]octane-3,4,5-tricarboxyclic acid core that is connected to two lipophilic polyketide arms. These initial steps feature the priming of an unusual benzoic acid starter unit onto the highly reducing polyketide synthase clz14, followed by oxaloacetate extension and product release to generate a tricarboxylic acid containing product. The phenylalanine ammonia lyase (PAL) clz10 and the acyl-CoA ligase clz12 are involved in transforming phenylalanine into benzoyl-CoA. The citrate synthase-like protein clz17 is involved in connecting the C-alpha-carbons of the hexaketide chain and oxaloacetate to afford the tricarboxylic acid unit. The potential hydrolytic enzymes, clz11 and clz13, are in close proximity to pks2 and may participate in product release. On the other side, the tetraketide arm is synthesized by a the squalestatin tetraketide synthase clz2 and enzymatically esterified to the core in the last biosynthetic step, by the acetyltransferase clz6. The biosynthesis of the tetraketide must involve 3 rounds of chain extension. After the first and second rounds methyl-transfer occurs, and in all rounds of extension the ketoreductase and dehydratase are active. The enoyl reductase and C-MeT of clz2 are not active in the final round of extension. The acetyltransferase clz6 appears to have a broad substrate selectivity for its acyl CoA substrate, allowing the in vitro synthesis of novel squalestatins. The biosynthesis of SQS1 requires several oxidative steps likely performed by oxidoreductases clz3, clz15 and clz16. Finally, in support of the identification of the cluster as being responsible for SQS1 production, the cluster contains a gene encoding a putative squalene synthase (SS) clz20, suggesting a likely mechanism for self-resistance. The polypeptide is NADP-dependent dehydrogenase clz5 (Cochliobolus lunatus (Filamentous fungus)).